A 559-amino-acid polypeptide reads, in one-letter code: O-fucosyltransferase 37 (559 aa).

The chain crosses the membrane as a helical; Signal-anchor for type II membrane protein span at residues 53-73 (FFLLLISLSLVFSGISFLTFS). Asn-126 carries an N-linked (GlcNAc...) asparagine glycan. 331–333 (HLR) is a substrate binding site. 4 N-linked (GlcNAc...) asparagine glycosylation sites follow: Asn-372, Asn-403, Asn-447, and Asn-504.

This sequence belongs to the glycosyltransferase GT106 family.

Its subcellular location is the membrane. It participates in glycan metabolism. The sequence is that of O-fucosyltransferase 37 from Arabidopsis thaliana (Mouse-ear cress).